Here is a 319-residue protein sequence, read N- to C-terminus: HTH-type transcriptional regulator YidZ (319 aa).

The HTH lysR-type domain occupies 8–65 (LDLNLLLCLQLLMQERSVTKAAKRMNVTPSAVSKSLAKLRAWFDDPLFVNSPLGLSPT). Residues 25–44 (VTKAAKRMNVTPSAVSKSLA) constitute a DNA-binding region (H-T-H motif).

The protein belongs to the LysR transcriptional regulatory family.

In terms of biological role, involved in anaerobic NO protection. The chain is HTH-type transcriptional regulator YidZ from Escherichia coli O17:K52:H18 (strain UMN026 / ExPEC).